Consider the following 476-residue polypeptide: Nitrosuccinate lyase (476 aa).

Arg137, Arg140, and Arg201 together coordinate fumarate. The active-site Proton acceptor is Ser302. 2 residues coordinate fumarate: Lys308 and Asn310. The Proton donor role is filled by Arg341.

The protein belongs to the class-II fumarase/aspartase family. Homotetramer.

It catalyses the reaction 2-nitrobutanedioate = fumarate + nitrite + H(+). It functions in the pathway antibiotic biosynthesis. Functionally, part of a gene cluster involved in the biosynthesis of cremeomycin, a light-sensitive o-diazoquinone with antibacterial and antiproliferative effects. Catalyzes the formation of nitrous acid from nitrosuccinic acid (2-nitrobutanedioate) by elimination of its nitro group. The protein is Nitrosuccinate lyase of Streptomyces cremeus.